A 210-amino-acid polypeptide reads, in one-letter code: Probable transcriptional regulator ycf29 (210 aa).

Positions 3-119 (NILILDTDIG…ELVVIIEGVL (117 aa)) constitute a Response regulatory domain. At aspartate 52 the chain carries 4-aspartylphosphate. An HTH luxR-type domain is found at 142–207 (SNNLKINFTP…ELVKYALENN (66 aa)).

It is found in the plastid. The protein resides in the cyanelle. In Cyanophora paradoxa, this protein is Probable transcriptional regulator ycf29 (ycf29).